The primary structure comprises 200 residues: Serine/threonine-protein kinase mos (200 aa).

Residues 2 to 200 (LCLLQPLGSG…ELLKGERVTA (199 aa)) enclose the Protein kinase domain. ATP contacts are provided by residues 8–16 (LGSGGFGSV) and K29. The Proton acceptor role is filled by D143.

This sequence belongs to the protein kinase superfamily. Ser/Thr protein kinase family.

It catalyses the reaction L-seryl-[protein] + ATP = O-phospho-L-seryl-[protein] + ADP + H(+). The catalysed reaction is L-threonyl-[protein] + ATP = O-phospho-L-threonyl-[protein] + ADP + H(+). This chain is Serine/threonine-protein kinase mos (MOS), found in Ciconia nigra (Black stork).